The sequence spans 432 residues: MTAGTLAHRPLLGCIADDFTGATDLANTLVRNGMRTVQTIGLPDVGAVQDIGEADALVVALKSRTIPAVEAVAQSLAALQWLRAQGCRQFVFKYCSTFDSTDAGNIGPVAEALLAALDSDFTIACPAFPENGRTIFRGHLFVGDALLNESGMEHHPLTPMTDASLVRVLQRQSKNKVGLLRYDAVARGAHATAERIAALRSDGVRMAIADAVSDADLFTLGEACANLPLITGGSGIALGLPENFRRAGLLPQRGDAASVPAIDGPGVVLAGSASRATNGQVARWLEQGRPALRIDPLALARGEAVADAALAFAAGHGEPVLIYATSSPDEVKAVQAELGVERAGHLVEQCLATVAAGLLARGTRRFVVAGGETSGAVVQALGVRALRIGAQIAPGVPATVTLDAKPLALALKSGNFGGPDFFDEALRQLGGH.

ATP is bound by residues histidine 155, serine 272, alanine 324, glycine 344, glutamate 348, 370 to 373, and glycine 414; that span reads GGET.

It belongs to the four-carbon acid sugar kinase family.

The enzyme catalyses 3-dehydro-L-erythronate + ATP = 3-dehydro-4-O-phospho-L-erythronate + ADP + H(+). It catalyses the reaction 3-dehydro-D-erythronate + ATP = 3-dehydro-4-O-phospho-D-erythronate + ADP + H(+). In terms of biological role, catalyzes the ATP-dependent phosphorylation of 3-oxo-tetronate to 3-oxo-tetronate 4-phosphate. The sequence is that of 3-oxo-tetronate kinase from Cupriavidus necator (strain ATCC 17699 / DSM 428 / KCTC 22496 / NCIMB 10442 / H16 / Stanier 337) (Ralstonia eutropha).